The chain runs to 194 residues: ATP-dependent Clp protease proteolytic subunit (194 aa).

Ser98 (nucleophile) is an active-site residue. His123 is a catalytic residue.

The protein belongs to the peptidase S14 family. As to quaternary structure, fourteen ClpP subunits assemble into 2 heptameric rings which stack back to back to give a disk-like structure with a central cavity, resembling the structure of eukaryotic proteasomes.

It localises to the cytoplasm. The enzyme catalyses Hydrolysis of proteins to small peptides in the presence of ATP and magnesium. alpha-casein is the usual test substrate. In the absence of ATP, only oligopeptides shorter than five residues are hydrolyzed (such as succinyl-Leu-Tyr-|-NHMec, and Leu-Tyr-Leu-|-Tyr-Trp, in which cleavage of the -Tyr-|-Leu- and -Tyr-|-Trp bonds also occurs).. Its function is as follows. Cleaves peptides in various proteins in a process that requires ATP hydrolysis. Has a chymotrypsin-like activity. Plays a major role in the degradation of misfolded proteins. This Clostridium botulinum (strain Hall / ATCC 3502 / NCTC 13319 / Type A) protein is ATP-dependent Clp protease proteolytic subunit.